We begin with the raw amino-acid sequence, 309 residues long: Prepilin leader peptidase/N-methyltransferase (309 aa).

A helical membrane pass occupies residues 35–55 (MQLAFAIVLGLVVGSFINVVV). Positions 96, 99, 121, and 124 each coordinate Zn(2+). The next 6 membrane-spanning stretches (helical) occupy residues 147 to 167 (LALFGPSGAALAAFGLCAALL), 183 to 203 (LTLPLLWAGLCVNLWGTFASL), 207 to 227 (VIGAIAGYLFLWCILWLFKLL), 230 to 250 (IEGIGYGDLKLLAALGAWLGW), 253 to 273 (LPQVVLIAAVAGAAVGLVATW), and 288 to 308 (FLAAGGAATLFFGTPFYLLLG).

Belongs to the peptidase A24 family. The cofactor is Zn(2+).

Its subcellular location is the cell inner membrane. It carries out the reaction Typically cleaves a -Gly-|-Phe- bond to release an N-terminal, basic peptide of 5-8 residues from type IV prepilin, and then N-methylates the new N-terminal amino group, the methyl donor being S-adenosyl-L-methionine.. Functionally, plays an essential role in type IV pili and type II pseudopili formation by proteolytically removing the leader sequence from substrate proteins and subsequently monomethylating the alpha-amino group of the newly exposed N-terminal phenylalanine. This chain is Prepilin leader peptidase/N-methyltransferase (gspO), found in Burkholderia pseudomallei (strain K96243).